An 82-amino-acid polypeptide reads, in one-letter code: Small ribosomal subunit protein bS16 (82 aa).

Belongs to the bacterial ribosomal protein bS16 family.

The chain is Small ribosomal subunit protein bS16 from Deinococcus deserti (strain DSM 17065 / CIP 109153 / LMG 22923 / VCD115).